We begin with the raw amino-acid sequence, 548 residues long: Terpene synthase 1 (548 aa).

Residues Asp-301, Asp-305, Asp-445, and Glu-453 each coordinate Mg(2+). Positions 301–305 (DDTYD) match the DDXXD motif motif.

Belongs to the terpene synthase family. Tpsa subfamily. It depends on Mg(2+) as a cofactor. The cofactor is Mn(2+).

It catalyses the reaction (2E,6E)-farnesyl diphosphate = (+)-valencene + diphosphate. It participates in secondary metabolite biosynthesis; terpenoid biosynthesis. Functionally, sesquiterpene synthase involved in the biosynthesis of volatile compounds which contribute to fruit flavor and aroma. Mediates the conversion of (2E,6E)-farnesyl diphosphate (FPP) into (+)-valencene. No activity detected with geranyl diphosphate (GPP). The polypeptide is Terpene synthase 1 (Citrus sinensis (Sweet orange)).